The sequence spans 379 residues: S-adenosylmethionine synthase (379 aa).

Residue H15 participates in ATP binding. Residue D17 coordinates Mg(2+). E43 is a K(+) binding site. 2 residues coordinate L-methionine: E56 and Q99. Residues 99–109 (QSPDITQGVDR) are flexible loop. ATP-binding positions include 164-166 (DAK), 230-231 (RF), D239, 245-246 (RK), A262, and K266. D239 contacts L-methionine. Position 270 (K270) interacts with L-methionine.

It belongs to the AdoMet synthase family. In terms of assembly, homotetramer; dimer of dimers. It depends on Mg(2+) as a cofactor. The cofactor is K(+).

The protein resides in the cytoplasm. The enzyme catalyses L-methionine + ATP + H2O = S-adenosyl-L-methionine + phosphate + diphosphate. Its pathway is amino-acid biosynthesis; S-adenosyl-L-methionine biosynthesis; S-adenosyl-L-methionine from L-methionine: step 1/1. Functionally, catalyzes the formation of S-adenosylmethionine (AdoMet) from methionine and ATP. The overall synthetic reaction is composed of two sequential steps, AdoMet formation and the subsequent tripolyphosphate hydrolysis which occurs prior to release of AdoMet from the enzyme. This Buchnera aphidicola subsp. Schizaphis graminum (strain Sg) protein is S-adenosylmethionine synthase.